The chain runs to 515 residues: MATTLNPSEISELIKNRIEKVKLAAESRNEGTVTSVSDGIVRIFGLADVMQGEMIELPNNTFALALNLERDSVGAVVLGDYEHLREGDVAKTTGRILEVPVGPELLGRVVNALGEPIDGKGPLGTDLTAPVERVAPGVIWRKSVDQPVQTGYKSVDSMIPIGRGQRELIIGDRQTGKTAMAIDAVINQKGTGIKCVYVAIGQKASTIANIVRKLEENGALAHTIVVAATASESAAMQYISAYSGCTMGEYFMDRGEDALIVYDDLSKQAVAYRQISLLLKRPPGREAYPGDVFYLHSRLLERAARVSEEYVEKFTEGKVTGKTGSLTALPIIETQAGDVSAFVPTNVISITDGQIFLETDLFNAGIRPAVNAGISVSRVGGSAQTKIIKKLSGGIRISLAQYRELAAFAQFASDLDEATRKQLERGQRVTELMKQKQYAPMSIANQALSIYAVNEGYLDDVPVNKLLAFEEGLHAHFANTQGELVSKVNATGGWDNDIEGAFKKGIAEFKTTGSW.

Residue 171 to 178 (GDRQTGKT) coordinates ATP.

It belongs to the ATPase alpha/beta chains family. F-type ATPases have 2 components, CF(1) - the catalytic core - and CF(0) - the membrane proton channel. CF(1) has five subunits: alpha(3), beta(3), gamma(1), delta(1), epsilon(1). CF(0) has three main subunits: a(1), b(2) and c(9-12). The alpha and beta chains form an alternating ring which encloses part of the gamma chain. CF(1) is attached to CF(0) by a central stalk formed by the gamma and epsilon chains, while a peripheral stalk is formed by the delta and b chains.

The protein localises to the cell membrane. It carries out the reaction ATP + H2O + 4 H(+)(in) = ADP + phosphate + 5 H(+)(out). Functionally, produces ATP from ADP in the presence of a proton gradient across the membrane. The alpha chain is a regulatory subunit. The protein is ATP synthase subunit alpha of Stenotrophomonas maltophilia (strain K279a).